A 703-amino-acid chain; its full sequence is Polyribonucleotide nucleotidyltransferase (703 aa).

Mg(2+) contacts are provided by Asp-486 and Asp-492. A KH domain is found at 553–614; that stretch reads PRITTIWIKP…AACDAAIQMI (62 aa). The region spanning 624 to 692 is the S1 motif domain; sequence GKLYMGTVKK…KQGKIKLSRK (69 aa).

Belongs to the polyribonucleotide nucleotidyltransferase family. Requires Mg(2+) as cofactor.

It localises to the cytoplasm. The enzyme catalyses RNA(n+1) + phosphate = RNA(n) + a ribonucleoside 5'-diphosphate. Its function is as follows. Involved in mRNA degradation. Catalyzes the phosphorolysis of single-stranded polyribonucleotides processively in the 3'- to 5'-direction. This is Polyribonucleotide nucleotidyltransferase from Trichlorobacter lovleyi (strain ATCC BAA-1151 / DSM 17278 / SZ) (Geobacter lovleyi).